Reading from the N-terminus, the 237-residue chain is Purine nucleoside phosphorylase DeoD-type (237 aa).

Histidine 4 contributes to the a purine D-ribonucleoside binding site. Phosphate-binding positions include glycine 20, arginine 24, arginine 43, and 87–90 (RVGT). Residues 180–182 (EME) and 204–205 (SD) contribute to the a purine D-ribonucleoside site. The active-site Proton donor is the aspartate 205.

This sequence belongs to the PNP/UDP phosphorylase family. In terms of assembly, homohexamer; trimer of homodimers.

It carries out the reaction a purine D-ribonucleoside + phosphate = a purine nucleobase + alpha-D-ribose 1-phosphate. The enzyme catalyses a purine 2'-deoxy-D-ribonucleoside + phosphate = a purine nucleobase + 2-deoxy-alpha-D-ribose 1-phosphate. Its function is as follows. Catalyzes the reversible phosphorolytic breakdown of the N-glycosidic bond in the beta-(deoxy)ribonucleoside molecules, with the formation of the corresponding free purine bases and pentose-1-phosphate. In Streptococcus suis (strain 98HAH33), this protein is Purine nucleoside phosphorylase DeoD-type.